The chain runs to 635 residues: Signal recognition particle subunit SRP72 (635 aa).

TPR repeat units lie at residues 7–42 (GGLY…YPKE), 75–105 (GHVG…DKDD), 106–139 (VKAL…HSDD), 171–204 (YSQL…CRKS), 220–253 (DSIR…NHPD), 255–290 (SVKA…DQTK), and 436–469 (VEVE…QCRL). Residues 539-635 (KRKRKIRLPK…QKKKKNASKF (97 aa)) form a disordered region. Over residues 557 to 569 (DPERWLPRQERST) the composition is skewed to basic and acidic residues. Over residues 625 to 635 (KQKKKKNASKF) the composition is skewed to basic residues.

It belongs to the SRP72 family. Heterodimer with srpa-68. Srpa-68-srpa-72 heterodimer formation is stabilized by the presence of 7SL RNA. Component of a signal recognition particle (SRP) complex that consists of a 7SL RNA molecule of 300 nucleotides and six protein subunits: srpa-72, srpa-68, SRP54, F37F2.2/SRP19, F25G6.8/SRP14 and ZK512.4/SRP9. Within the SRP complex, interacts (via N-terminus) with srpa-68 (via C-terminus).

It localises to the cytoplasm. The protein resides in the endoplasmic reticulum. Its function is as follows. Component of the signal recognition particle (SRP) complex, a ribonucleoprotein complex that mediates the cotranslational targeting of secretory and membrane proteins to the endoplasmic reticulum (ER). The SRP complex interacts with the signal sequence in nascent secretory and membrane proteins and directs them to the membrane of the ER. The SRP complex targets the ribosome-nascent chain complex to the SRP receptor (SR), which is anchored in the ER, where SR compaction and GTPase rearrangement drive cotranslational protein translocation into the ER. Binds the signal recognition particle RNA (7SL RNA) in presence of srpa-68. Can bind 7SL RNA with low affinity. The SRP complex possibly participates in the elongation arrest function. The protein is Signal recognition particle subunit SRP72 of Caenorhabditis elegans.